A 140-amino-acid polypeptide reads, in one-letter code: MAKKEVAKIKLQIPAGAANPSPPVGPALGQHGLNIMGFCKEFNARTQDQKGMIIPVVITVYADRSFTFITKTPPASVLIMKAAKIEKGSGEPNRNKVGSLTMAQVEEIAKLKLPDLNAAGLESAIKSIAGTARSMGIDVK.

This sequence belongs to the universal ribosomal protein uL11 family. In terms of assembly, part of the ribosomal stalk of the 50S ribosomal subunit. Interacts with L10 and the large rRNA to form the base of the stalk. L10 forms an elongated spine to which L12 dimers bind in a sequential fashion forming a multimeric L10(L12)X complex. In terms of processing, one or more lysine residues are methylated.

Functionally, forms part of the ribosomal stalk which helps the ribosome interact with GTP-bound translation factors. The polypeptide is Large ribosomal subunit protein uL11 (Desulfovibrio desulfuricans (strain ATCC 27774 / DSM 6949 / MB)).